The chain runs to 246 residues: Metallo-beta-lactamase type 2 (246 aa).

Residues 1 to 20 (MKKLFVLCVCFFCSITAAGA) form the signal peptide. Residues His-95, His-97, Asp-99, His-157, and Cys-176 each coordinate Zn(2+). Asp-99 serves as a coordination point for a beta-lactam. Residues Lys-179 and Asn-185 each coordinate a beta-lactam. His-215 is a binding site for Zn(2+).

The protein belongs to the metallo-beta-lactamase superfamily. Class-B beta-lactamase family. Monomer. Zn(2+) serves as cofactor.

It is found in the periplasm. The catalysed reaction is a beta-lactam + H2O = a substituted beta-amino acid. Functionally, confers resistance to the different beta-lactam antibiotics (penicillin, cephalosporin and carbapenem) via the hydrolysis of the beta-lactam ring. Exhibits higher catalytic efficiency toward ticarcillin and piperacillin than blaIMP-1. Exhibits catalytic activity for carbapenem compounds, but has a preference for imipenem and ertapenem over meropenem. Has high efficiency for the hydrolysis of cefuroxime. Exhibits hydrolysis of all cephalosporins tested. Exhibits no hydrolysis of temocillin, the 6-alpha-methoxy semisynthetic derivative of ticarcillin. In Pseudomonas aeruginosa, this protein is Metallo-beta-lactamase type 2.